The primary structure comprises 107 residues: UPF0060 membrane protein Sala_0701 (107 aa).

4 consecutive transmembrane segments (helical) span residues F4 to L24, V30 to V50, A60 to A80, and L87 to G107.

Belongs to the UPF0060 family.

The protein resides in the cell inner membrane. In Sphingopyxis alaskensis (strain DSM 13593 / LMG 18877 / RB2256) (Sphingomonas alaskensis), this protein is UPF0060 membrane protein Sala_0701.